Here is a 242-residue protein sequence, read N- to C-terminus: Platinum sensitivity protein 3 (242 aa).

In terms of assembly, component of the SHU complex composed of at least CSM2, PSY3, SHU1 and SHU2.

The protein localises to the nucleus. Required for resistance to the DNA-damaging agents methyl methanesulfonate (MMS), cisplatin and oxaliplatin, but not to mitomycin C. Plays a role in protection against mutation accumulation. May be a component of the recombination-repair pathway. This chain is Platinum sensitivity protein 3 (PSY3), found in Saccharomyces cerevisiae (strain ATCC 204508 / S288c) (Baker's yeast).